A 331-amino-acid chain; its full sequence is Peroxisomal nicotinamide adenine dinucleotide carrier (331 aa).

3 Solcar repeats span residues Ser2 to Arg91, Val109 to Lys216, and Val229 to Gly320. 6 helical membrane passes run Leu5–Leu25, Leu63–Tyr85, Leu116–Val136, Val180–Val200, Phe235–Val255, and Tyr293–Ile313.

It belongs to the mitochondrial carrier (TC 2.A.29) family. As to quaternary structure, homodimer. In terms of tissue distribution, expressed in cotyledons, hypocotyls, vascular tissues, trichomes, hydathodes, seeds, pedicels, flowers and stigma.

Its subcellular location is the glyoxysome membrane. Its activity is regulated as follows. Inhibited by pyridoxal 5'-phosphate, bathophenanthroline, tannic acid, mersalyl, mercuric chloride and bromocresol purple. Functionally, mediates the NAD(+) import into peroxisomes. Favors the NAD(+)(in)/AMP(out) antiport exchange, but is also able to catalyze a low unidirectional transport that might be essential under special conditions. Transports CoA, dephospho-CoA, acetyl-CoA, adenosine 3',5'-diphosphate (PAP), NAD(+), AMP, ADP and NADH, but has no activity with ATP, GTP, GDP, NADPH, NADP(+) or FAD. Required for peroxisomes proliferation. The polypeptide is Peroxisomal nicotinamide adenine dinucleotide carrier (PXN) (Arabidopsis thaliana (Mouse-ear cress)).